Consider the following 76-residue polypeptide: uncharacterized protein (76 aa).

The N-terminal stretch at Met-1 to Ala-22 is a signal peptide.

This is an uncharacterized protein from Escherichia coli O157:H7.